A 326-amino-acid chain; its full sequence is Malate dehydrogenase (326 aa).

12–18 (GGTGQIA) contacts NAD(+). Substrate contacts are provided by arginine 93 and arginine 99. NAD(+)-binding positions include asparagine 106, glutamine 113, and 130 to 132 (VGN). Asparagine 132 and arginine 163 together coordinate substrate. The active-site Proton acceptor is the histidine 188.

The protein belongs to the LDH/MDH superfamily. MDH type 2 family.

The catalysed reaction is (S)-malate + NAD(+) = oxaloacetate + NADH + H(+). Functionally, catalyzes the reversible oxidation of malate to oxaloacetate. The sequence is that of Malate dehydrogenase from Chlamydia trachomatis serovar L2 (strain ATCC VR-902B / DSM 19102 / 434/Bu).